Here is a 226-residue protein sequence, read N- to C-terminus: PKHD-type hydroxylase mma_3620 (226 aa).

The 101-residue stretch at 78-178 folds into the Fe2OG dioxygenase domain; it reads RYMPPLFNRY…RVCSFFWLQS (101 aa). Fe cation is bound by residues His96, Asp98, and His159. Position 169 (Arg169) interacts with 2-oxoglutarate.

The cofactor is Fe(2+). It depends on L-ascorbate as a cofactor.

This chain is PKHD-type hydroxylase mma_3620, found in Janthinobacterium sp. (strain Marseille) (Minibacterium massiliensis).